Here is a 412-residue protein sequence, read N- to C-terminus: Gamma-glutamyl phosphate reductase (412 aa).

Belongs to the gamma-glutamyl phosphate reductase family.

The protein resides in the cytoplasm. The enzyme catalyses L-glutamate 5-semialdehyde + phosphate + NADP(+) = L-glutamyl 5-phosphate + NADPH + H(+). The protein operates within amino-acid biosynthesis; L-proline biosynthesis; L-glutamate 5-semialdehyde from L-glutamate: step 2/2. Its function is as follows. Catalyzes the NADPH-dependent reduction of L-glutamate 5-phosphate into L-glutamate 5-semialdehyde and phosphate. The product spontaneously undergoes cyclization to form 1-pyrroline-5-carboxylate. In Nitratiruptor sp. (strain SB155-2), this protein is Gamma-glutamyl phosphate reductase.